The primary structure comprises 71 residues: Protein PSY3 (71 aa).

The first 25 residues, 1 to 25 (MGYSSSSRIGLCLFLFFTFALLSSA), serve as a signal peptide directing secretion. Positions 26 to 49 (RISLSFSENEMTVVPERSLMVSTN) are excised as a propeptide. Positions 47-71 (STNDYSDPTANGRHDPPRGGRGRRR) are disordered. Tyrosine 51 bears the Sulfotyrosine mark. A 4-hydroxyproline modification is found at proline 63. O-linked (Ara...) hydroxyproline glycosylation occurs at proline 63. A propeptide spanning residues 66–71 (GRGRRR) is cleaved from the precursor.

This sequence belongs to the sulfated-peptide plant hormone family. In terms of processing, the sulfation and the glycosylation are required for full activity.

The protein resides in the secreted. In terms of biological role, promotes cellular proliferation and expansion. The protein is Protein PSY3 (PSY3) of Arabidopsis thaliana (Mouse-ear cress).